Consider the following 309-residue polypeptide: MSKIVVALGGNALGQSPKEQLDLLKSTSKSLVSLIDKGYEIVISHGNGPQVGSINLGLNYAAEHKQGPPFPFPECGAMSQAYIGYQMQESLQNELHSMGIDKEVVTLVTQVQVASDDSAFNNPTKPIGLFYTKEQADKFTKEKGYTFVEDSGRGYRRVVPSPQPISIVELDSIETLITHGTLVIAAGGGGIPVIKENEVYTGVDAVIDKDKTSALLAAHLQSDQLIILTAVDHVYINYGKENQRGLDEVSVDEMKKHISDGQFAKGSMLPKVEAALQFLEKNTKGSVLITSLAGLGDALDGKIGTLIKN.

Belongs to the carbamate kinase family.

The protein localises to the cytoplasm. It carries out the reaction hydrogencarbonate + NH4(+) + ATP = carbamoyl phosphate + ADP + H2O + H(+). It participates in metabolic intermediate metabolism; carbamoyl phosphate degradation; CO(2) and NH(3) from carbamoyl phosphate: step 1/1. In Staphylococcus epidermidis (strain ATCC 12228 / FDA PCI 1200), this protein is Carbamate kinase 2 (arcC2).